Reading from the N-terminus, the 225-residue chain is UPF0758 protein Sama_0327 (225 aa).

Residues 102–224 form the MPN domain; sequence VLTSPDLTRD…IVSFAERGWI (123 aa). The Zn(2+) site is built by histidine 173, histidine 175, and aspartate 186. Positions 173–186 match the JAMM motif motif; sequence HNHPSGVAEPSQAD.

The protein belongs to the UPF0758 family.

This is UPF0758 protein Sama_0327 from Shewanella amazonensis (strain ATCC BAA-1098 / SB2B).